Here is a 288-residue protein sequence, read N- to C-terminus: Sulfur carrier protein FdhD (288 aa).

Cys-122 functions as the Cysteine persulfide intermediate in the catalytic mechanism. 268 to 273 provides a ligand contact to Mo-bis(molybdopterin guanine dinucleotide); the sequence is FVRGER.

It belongs to the FdhD family.

It localises to the cytoplasm. Its function is as follows. Required for formate dehydrogenase (FDH) activity. Acts as a sulfur carrier protein that transfers sulfur from IscS to the molybdenum cofactor prior to its insertion into FDH. The sequence is that of Sulfur carrier protein FdhD from Anaeromyxobacter dehalogenans (strain 2CP-C).